The sequence spans 406 residues: UPF0754 membrane protein Cyan7425_4067 (406 aa).

A helical membrane pass occupies residues 381 to 401 (IVTLGGVLGLLIGIAQSVLLL).

Belongs to the UPF0754 family.

Its subcellular location is the cell inner membrane. The protein is UPF0754 membrane protein Cyan7425_4067 of Cyanothece sp. (strain PCC 7425 / ATCC 29141).